A 692-amino-acid polypeptide reads, in one-letter code: DNA ligase (692 aa).

Residues 35-39, 88-89, and Glu117 each bind NAD(+); these read DLVYD and SL. Lys119 serves as the catalytic N6-AMP-lysine intermediate. NAD(+) is bound by residues Arg140, Glu176, Lys301, and Lys325. Residues Cys416, Cys419, Cys434, and Cys439 each contribute to the Zn(2+) site. In terms of domain architecture, BRCT spans 611-692; it reads LTNQSNSWAS…FDLIKNSKKT (82 aa).

The protein belongs to the NAD-dependent DNA ligase family. LigA subfamily. Mg(2+) serves as cofactor. Requires Mn(2+) as cofactor.

The enzyme catalyses NAD(+) + (deoxyribonucleotide)n-3'-hydroxyl + 5'-phospho-(deoxyribonucleotide)m = (deoxyribonucleotide)n+m + AMP + beta-nicotinamide D-nucleotide.. Functionally, DNA ligase that catalyzes the formation of phosphodiester linkages between 5'-phosphoryl and 3'-hydroxyl groups in double-stranded DNA using NAD as a coenzyme and as the energy source for the reaction. It is essential for DNA replication and repair of damaged DNA. This chain is DNA ligase, found in Mesomycoplasma hyopneumoniae (strain 232) (Mycoplasma hyopneumoniae).